A 151-amino-acid chain; its full sequence is Large ribosomal subunit protein bL9 (151 aa).

Belongs to the bacterial ribosomal protein bL9 family.

In terms of biological role, binds to the 23S rRNA. The sequence is that of Large ribosomal subunit protein bL9 from Lactobacillus acidophilus (strain ATCC 700396 / NCK56 / N2 / NCFM).